The sequence spans 153 residues: Endoribonuclease YbeY (153 aa).

Residues His-118, His-122, and His-128 each contribute to the Zn(2+) site.

Belongs to the endoribonuclease YbeY family. Requires Zn(2+) as cofactor.

The protein resides in the cytoplasm. In terms of biological role, single strand-specific metallo-endoribonuclease involved in late-stage 70S ribosome quality control and in maturation of the 3' terminus of the 16S rRNA. This Chloroflexus aggregans (strain MD-66 / DSM 9485) protein is Endoribonuclease YbeY.